Reading from the N-terminus, the 250-residue chain is Large ribosomal subunit protein uL13c (250 aa).

Residues 1–47 (MATMACASSLTFPSAQTQKSFFGTNVKQTPVLSFPRPTVAAAVAVSA) constitute a chloroplast transit peptide.

Component of the chloroplast large ribosomal subunit (LSU). Mature 70S chloroplast ribosomes of higher plants consist of a small (30S) and a large (50S) subunit. The 30S small subunit contains 1 molecule of ribosomal RNA (16S rRNA) and 24 different proteins. The 50S large subunit contains 3 rRNA molecules (23S, 5S and 4.5S rRNA) and 33 different proteins.

Its subcellular location is the plastid. It is found in the chloroplast. In terms of biological role, component of the chloroplast ribosome (chloro-ribosome), a dedicated translation machinery responsible for the synthesis of chloroplast genome-encoded proteins, including proteins of the transcription and translation machinery and components of the photosynthetic apparatus. In Spinacia oleracea (Spinach), this protein is Large ribosomal subunit protein uL13c (RPL13).